The sequence spans 196 residues: Recombination protein RecR (196 aa).

A C4-type zinc finger spans residues 57–72 (CERCHTFTQADICATC). In terms of domain architecture, Toprim spans 80 to 175 (SKLCVVETPA…RLTRLARGVP (96 aa)).

It belongs to the RecR family.

Its function is as follows. May play a role in DNA repair. It seems to be involved in an RecBC-independent recombinational process of DNA repair. It may act with RecF and RecO. The polypeptide is Recombination protein RecR (Albidiferax ferrireducens (strain ATCC BAA-621 / DSM 15236 / T118) (Rhodoferax ferrireducens)).